The following is a 290-amino-acid chain: Aquaporin PIP2-1 (290 aa).

Positions 1 to 20 are disordered; that stretch reads MGKDDVIESGAGGGEFAAKD. 2 helical membrane passes run 43-63 and 80-100; these read AVIA…ATVI and CGGV…FVLV. The NPA 1 signature appears at 112 to 114; it reads NPA. 3 helical membrane-spanning segments follow: residues 131-151, 173-193, and 205-225; these read LLYI…VKAF, GTGL…VFSA, and VPVL…LATI. Residues 233–235 carry the NPA 2 motif; the sequence is NPA. The chain crosses the membrane as a helical span at residues 255–275; sequence IFWVGPLVGAAIAAFYHQYIL.

Belongs to the MIP/aquaporin (TC 1.A.8) family. PIP (TC 1.A.8.11) subfamily. In terms of assembly, homomers. Can interact with PIP1-2 to form heteromers. As to expression, expressed in roots.

It localises to the cell membrane. Water channel required to facilitate the transport of water across cell membrane. Active as homomers. Increased activity when heteromerization with PIP1-2. The chain is Aquaporin PIP2-1 (PIP2-1) from Zea mays (Maize).